Reading from the N-terminus, the 435-residue chain is Putative dimethyl sulfoxide reductase membrane subunit C (435 aa).

11 helical membrane passes run 22–42, 57–77, 95–115, 135–155, 186–206, 220–240, 257–277, 281–301, 304–324, 333–353, and 392–412; these read GWLGVLALLLVIGLGAWAYQL, WGLYIMLFVLFVGLSAGGLIL, LGVLVSLGCIIVAGLLILPDI, VWDFGIVMLYGALNVWYLWLL, FWTAVCALPAAVALHSVTGWI, LVAPVFIAKALVSGLGLLLVV, LTSLGKLLGIFLAFHVVYLLA, LPHAWAHHFGFWAITSNFLIG, VYFWLWTGLGGAVPLLLLATP, IFTASVLAVFGTLFEGIRLVF, and VEIAVTVGVISIGALIVMAGL.

This sequence belongs to the NrfD family. Probable multiprotein complex that likely consists of DmsA, DmsB and DmsC.

It is found in the cell membrane. Dimethyl sulfoxide (DMSO) reductase catalyzes the reduction of dimethyl sulfoxide (DMSO) to dimethyl sulfide (DMS) during anaerobic respiration; it can also use trimethylamine N-oxide (TMAO) as terminal electron acceptor. Subunit C is proposed to be a membrane anchoring subunit. The protein is Putative dimethyl sulfoxide reductase membrane subunit C (dmsC) of Halobacterium salinarum (strain ATCC 700922 / JCM 11081 / NRC-1) (Halobacterium halobium).